A 218-amino-acid chain; its full sequence is DNA endonuclease I-ChuI (218 aa).

Belongs to the LAGLIDADG endonuclease family.

It is found in the plastid. The protein resides in the chloroplast. Its function is as follows. Probable endonuclease involved in intron homing. Encoded in the group-I intron of the subunit rRNA-encoding gene (rrnL), it generates a staggered cut with 4-nt (CTCG) 3'-OH overhangs 2 bp downstream from the intron insertion site. In Chlamydomonas applanata (Chlamydomonas humicola), this protein is DNA endonuclease I-ChuI.